The chain runs to 290 residues: ATP synthase gamma chain (290 aa).

Belongs to the ATPase gamma chain family. As to quaternary structure, F-type ATPases have 2 components, CF(1) - the catalytic core - and CF(0) - the membrane proton channel. CF(1) has five subunits: alpha(3), beta(3), gamma(1), delta(1), epsilon(1). CF(0) has three main subunits: a, b and c.

Its subcellular location is the cell membrane. Produces ATP from ADP in the presence of a proton gradient across the membrane. The gamma chain is believed to be important in regulating ATPase activity and the flow of protons through the CF(0) complex. The sequence is that of ATP synthase gamma chain from Buchnera aphidicola subsp. Schlechtendalia chinensis.